Consider the following 111-residue polypeptide: Large ribosomal subunit protein uL22 (111 aa).

This sequence belongs to the universal ribosomal protein uL22 family. As to quaternary structure, part of the 50S ribosomal subunit.

Functionally, this protein binds specifically to 23S rRNA; its binding is stimulated by other ribosomal proteins, e.g. L4, L17, and L20. It is important during the early stages of 50S assembly. It makes multiple contacts with different domains of the 23S rRNA in the assembled 50S subunit and ribosome. The globular domain of the protein is located near the polypeptide exit tunnel on the outside of the subunit, while an extended beta-hairpin is found that lines the wall of the exit tunnel in the center of the 70S ribosome. The chain is Large ribosomal subunit protein uL22 from Chlamydia trachomatis serovar A (strain ATCC VR-571B / DSM 19440 / HAR-13).